We begin with the raw amino-acid sequence, 896 residues long: Protein translocase subunit SecA (896 aa).

ATP is bound by residues Q87, 105-109 (GEGKT), and D512. The disordered stretch occupies residues 867-889 (QEPARSNRVAGRNDPCPCGSGKK). Residues C882, C884, C893, and C894 each coordinate Zn(2+).

The protein belongs to the SecA family. In terms of assembly, monomer and homodimer. Part of the essential Sec protein translocation apparatus which comprises SecA, SecYEG and auxiliary proteins SecDF-YajC and YidC. Requires Zn(2+) as cofactor.

Its subcellular location is the cell inner membrane. The protein localises to the cytoplasm. It carries out the reaction ATP + H2O + cellular proteinSide 1 = ADP + phosphate + cellular proteinSide 2.. Functionally, part of the Sec protein translocase complex. Interacts with the SecYEG preprotein conducting channel. Has a central role in coupling the hydrolysis of ATP to the transfer of proteins into and across the cell membrane, serving as an ATP-driven molecular motor driving the stepwise translocation of polypeptide chains across the membrane. The chain is Protein translocase subunit SecA from Pelobacter propionicus (strain DSM 2379 / NBRC 103807 / OttBd1).